Reading from the N-terminus, the 176-residue chain is NAD(P)H-quinone oxidoreductase subunit J (176 aa).

The segment at 1-32 is disordered; it reads MEKEGLAKSSDTSIKKEGFISQSLSKDGIPNQ. Positions 20-32 are enriched in polar residues; the sequence is ISQSLSKDGIPNQ.

This sequence belongs to the complex I 30 kDa subunit family. NDH-1 can be composed of about 15 different subunits; different subcomplexes with different compositions have been identified which probably have different functions.

Its subcellular location is the cellular thylakoid membrane. It catalyses the reaction a plastoquinone + NADH + (n+1) H(+)(in) = a plastoquinol + NAD(+) + n H(+)(out). The catalysed reaction is a plastoquinone + NADPH + (n+1) H(+)(in) = a plastoquinol + NADP(+) + n H(+)(out). Its function is as follows. NDH-1 shuttles electrons from an unknown electron donor, via FMN and iron-sulfur (Fe-S) centers, to quinones in the respiratory and/or the photosynthetic chain. The immediate electron acceptor for the enzyme in this species is believed to be plastoquinone. Couples the redox reaction to proton translocation, and thus conserves the redox energy in a proton gradient. Cyanobacterial NDH-1 also plays a role in inorganic carbon-concentration. This is NAD(P)H-quinone oxidoreductase subunit J from Prochlorococcus marinus (strain MIT 9215).